The primary structure comprises 489 residues: N-succinylglutamate 5-semialdehyde dehydrogenase (489 aa).

Residue glycine 223–glycine 228 coordinates NAD(+). Catalysis depends on residues glutamate 246 and cysteine 280.

This sequence belongs to the aldehyde dehydrogenase family. AstD subfamily.

It catalyses the reaction N-succinyl-L-glutamate 5-semialdehyde + NAD(+) + H2O = N-succinyl-L-glutamate + NADH + 2 H(+). The protein operates within amino-acid degradation; L-arginine degradation via AST pathway; L-glutamate and succinate from L-arginine: step 4/5. Its function is as follows. Catalyzes the NAD-dependent reduction of succinylglutamate semialdehyde into succinylglutamate. This Aeromonas salmonicida (strain A449) protein is N-succinylglutamate 5-semialdehyde dehydrogenase.